Reading from the N-terminus, the 350-residue chain is Small ribosomal subunit biogenesis GTPase RsgA (350 aa).

Residues 1–17 (MSKNKLSKGQQRRVNAN) are compositionally biased toward polar residues. The segment at 1-33 (MSKNKLSKGQQRRVNANHQRRLKTSKEKPDYDD) is disordered. The CP-type G domain maps to 104–273 (TSVLTRPDFY…VIDSPGVREF (170 aa)). Residues 160–163 (NKID) and 214–222 (GQSGVGKSS) contribute to the GTP site. Zn(2+) contacts are provided by C297, C302, H304, and C310.

Belongs to the TRAFAC class YlqF/YawG GTPase family. RsgA subfamily. As to quaternary structure, monomer. Associates with 30S ribosomal subunit, binds 16S rRNA. It depends on Zn(2+) as a cofactor.

The protein resides in the cytoplasm. In terms of biological role, one of several proteins that assist in the late maturation steps of the functional core of the 30S ribosomal subunit. Helps release RbfA from mature subunits. May play a role in the assembly of ribosomal proteins into the subunit. Circularly permuted GTPase that catalyzes slow GTP hydrolysis, GTPase activity is stimulated by the 30S ribosomal subunit. The sequence is that of Small ribosomal subunit biogenesis GTPase RsgA from Escherichia coli (strain SMS-3-5 / SECEC).